A 495-amino-acid chain; its full sequence is ATP synthase subunit beta, chloroplastic (495 aa).

An ATP-binding site is contributed by 172–179 (GGAGVGKT).

This sequence belongs to the ATPase alpha/beta chains family. As to quaternary structure, F-type ATPases have 2 components, CF(1) - the catalytic core - and CF(0) - the membrane proton channel. CF(1) has five subunits: alpha(3), beta(3), gamma(1), delta(1), epsilon(1). CF(0) has four main subunits: a(1), b(1), b'(1) and c(9-12).

The protein localises to the plastid. It localises to the chloroplast thylakoid membrane. It carries out the reaction ATP + H2O + 4 H(+)(in) = ADP + phosphate + 5 H(+)(out). In terms of biological role, produces ATP from ADP in the presence of a proton gradient across the membrane. The catalytic sites are hosted primarily by the beta subunits. This chain is ATP synthase subunit beta, chloroplastic, found in Hyacinthoides non-scripta (English bluebell).